We begin with the raw amino-acid sequence, 573 residues long: Phosphomethylpyrimidine synthase (573 aa).

Substrate-binding positions include Asn190, Met219, Tyr248, His284, 304–306 (SRG), 345–348 (DGLR), and Glu384. His388 lines the Zn(2+) pocket. Tyr411 lines the substrate pocket. His452 is a Zn(2+) binding site. Residues Cys532, Cys535, and Cys540 each coordinate [4Fe-4S] cluster.

This sequence belongs to the ThiC family. [4Fe-4S] cluster is required as a cofactor.

The catalysed reaction is 5-amino-1-(5-phospho-beta-D-ribosyl)imidazole + S-adenosyl-L-methionine = 4-amino-2-methyl-5-(phosphooxymethyl)pyrimidine + CO + 5'-deoxyadenosine + formate + L-methionine + 3 H(+). The protein operates within cofactor biosynthesis; thiamine diphosphate biosynthesis. In terms of biological role, catalyzes the synthesis of the hydroxymethylpyrimidine phosphate (HMP-P) moiety of thiamine from aminoimidazole ribotide (AIR) in a radical S-adenosyl-L-methionine (SAM)-dependent reaction. The polypeptide is Phosphomethylpyrimidine synthase (Geobacillus sp. (strain WCH70)).